The chain runs to 647 residues: Threonine--tRNA ligase (647 aa).

Residues 1–61 (MINITFPDGA…TEDGSIEIVT (61 aa)) enclose the TGS domain. Residues 242–540 (DHRKLGKELD…LIENYKGAFP (299 aa)) form a catalytic region. Cys-336, His-387, and His-517 together coordinate Zn(2+).

It belongs to the class-II aminoacyl-tRNA synthetase family. Homodimer. Zn(2+) serves as cofactor.

The protein resides in the cytoplasm. The enzyme catalyses tRNA(Thr) + L-threonine + ATP = L-threonyl-tRNA(Thr) + AMP + diphosphate + H(+). Catalyzes the attachment of threonine to tRNA(Thr) in a two-step reaction: L-threonine is first activated by ATP to form Thr-AMP and then transferred to the acceptor end of tRNA(Thr). Also edits incorrectly charged L-seryl-tRNA(Thr). The chain is Threonine--tRNA ligase from Streptococcus pneumoniae (strain ATCC 700669 / Spain 23F-1).